We begin with the raw amino-acid sequence, 215 residues long: Porin MspB (215 aa).

A signal peptide spans 1–31 (MTAFKRVLIAMISALLAGTTGMFVSAGAAHA).

Belongs to the mycobacterial porin (TC 1.B.24) family. As to quaternary structure, octamers. Probably forms a goblet with the wide end on the exterior of the outer membrane and a central channel. It is not known if mixed oligomers of MspB with other Msp subunits form in vivo.

It localises to the cell outer membrane. Its subcellular location is the secreted. The protein localises to the cell wall. Its function is as follows. A backup porin induced when MspA, the major porin, is deleted. Probably forms a water-filled channel which favors the permeation of cations. There are about 2400 porins in wild-type, 800 in an mspA deletion and 150 in a double mspA-mspC deletion. A triple mspA-mspC-mspD deletion mutant has low but detectable channel activity. Different conductance values with maxima at 2.3 and 4.6 nanosiemens might be caused by a simultaneous reconstitution of MspB channels into the membrane or by the existence of different MspB conformations. The sequence is that of Porin MspB (mspB) from Mycolicibacterium smegmatis (strain ATCC 700084 / mc(2)155) (Mycobacterium smegmatis).